Reading from the N-terminus, the 376-residue chain is MTAQQNTSLASFTGDAQPYGGGDPYADYRTADLPFTQYANLADRQLGAGVVAANDEFFAQRENLLVPEPAEFDPEHFGHKGKVMDGWETRRRRGVSAEQPWPTEEDHDWALIRLGAPGVIRGIVVDTAHFRGNYPQAVSVEGASVAGSPSPEELLADDVKWTTLVPRTPVGGHAANGFAVSAEQRFTHLRLKQHPDGGIARLRVYGEVVADPAWLAALGTFDVVALENGGQVEDASNLFYSPATNTIQPGRSRKMDDGWETRRRRDKGNDWIQYRLVDRSQIRAIEIDTAYLKGNSAGWASVSVKDGEAGEWREVLPRTRMQPDTNHRFVLPEAAVGTHARVDIFPDGGISRLRLFGSLTEDGAARLAARHQELGG.

Belongs to the allantoicase family.

The enzyme catalyses allantoate + H2O = (S)-ureidoglycolate + urea. The protein operates within nitrogen metabolism; (S)-allantoin degradation; (S)-ureidoglycolate from allantoate (aminidohydrolase route): step 1/1. The chain is Probable allantoicase from Streptomyces coelicolor (strain ATCC BAA-471 / A3(2) / M145).